The chain runs to 233 residues: Glutathione S-transferase U15 (233 aa).

Residues 5–85 enclose the GST N-terminal domain; that stretch reads EEVKLLGTWY…YIDETWNSSG (81 aa). Glutathione is bound by residues 15 to 16, 42 to 43, 56 to 57, and 69 to 70; these read SP, SK, KV, and VS. The 128-residue stretch at 92 to 219 folds into the GST C-terminal domain; it reads HPYDRALARF…VPDIDKVAKF (128 aa). Threonine 158 bears the Phosphothreonine mark.

The protein belongs to the GST superfamily. Tau family.

It is found in the cytoplasm. It localises to the cytosol. The catalysed reaction is RX + glutathione = an S-substituted glutathione + a halide anion + H(+). Its function is as follows. May be involved in the conjugation of reduced glutathione to a wide number of exogenous and endogenous hydrophobic electrophiles and have a detoxification role against certain herbicides. The polypeptide is Glutathione S-transferase U15 (GSTU15) (Arabidopsis thaliana (Mouse-ear cress)).